The chain runs to 117 residues: Tyrosine-protein phosphatase 25 (117 aa).

Residues 1–117 enclose the Tyrosine-protein phosphatase domain; sequence WLMIIEQKCN…DLIGQSPIVV (117 aa). Asp85 provides a ligand contact to substrate.

This sequence belongs to the protein-tyrosine phosphatase family.

The catalysed reaction is O-phospho-L-tyrosyl-[protein] + H2O = L-tyrosyl-[protein] + phosphate. This chain is Tyrosine-protein phosphatase 25 (STY-25), found in Styela plicata (Wrinkled sea squirt).